We begin with the raw amino-acid sequence, 206 residues long: Small ribosomal subunit protein uS4 (206 aa).

The S4 RNA-binding domain occupies 98 to 155; it reads TRLDNVVYRLGWALSRAQARQIVSHGKIAVNGKRVNIPSYNLKPGDVVELLDKDLIPV.

Belongs to the universal ribosomal protein uS4 family. As to quaternary structure, part of the 30S ribosomal subunit. Contacts protein S5. The interaction surface between S4 and S5 is involved in control of translational fidelity.

Its function is as follows. One of the primary rRNA binding proteins, it binds directly to 16S rRNA where it nucleates assembly of the body of the 30S subunit. In terms of biological role, with S5 and S12 plays an important role in translational accuracy. The polypeptide is Small ribosomal subunit protein uS4 (Dictyoglomus turgidum (strain DSM 6724 / Z-1310)).